A 1014-amino-acid chain; its full sequence is Chondroitin sulfate ABC exolyase (1014 aa).

The N-terminal stretch at 1–14 (MLILSFLCPAFLNA) is a signal peptide. The Ca(2+) site is built by Ser24, Glu26, Asp50, His53, and Asp161. Residues His345 and His454 each act as proton acceptor in the active site. The active-site Proton donor is the Tyr461.

The protein belongs to the polysaccharide lyase 8 family. Monomer. The cofactor is Ca(2+). Mg(2+) is required as a cofactor.

The protein localises to the periplasm. It catalyses the reaction Exolytic removal of Delta(4)-unsaturated disaccharide residues from the non-reducing ends of both polymeric chondroitin/dermatan sulfates and their oligosaccharide fragments.. With respect to regulation, specific activity for chondroitin sulfate substrates increases moderately (2-fold) while an increase of 25-fold is observed for dermatan sulfate as substrate upon addition of Ca(2+) or Mg(2+) ions. Increasing the concentration of Na(+), K(+) or Cs(+) chloride from 0 to 0.1 M, increases the activity against all substrates. Further increases in salt concentration reduces the activity dramatically, with 50% inhibition occurring at 0.15 M and nearly complete inhibition at 0.4 M salt. The addition of 10 mM Ca(2+) or Mg(2+) ions increases the activity against chondroitin 4- and 6-sulfates by 2-3-fold, while the activity against dermatan sulfate increases much more significantly by 50-fold. Addition of Mn(2+) and Zn(2+) reduces activity against chondroitin sulfate substrates, but increases the activity against dermatan sulfate. Increasing the concentration of CaCl(2) with both chondroitin 4- and 6-sulfates from 0 to 0.04 M increases the activity. A further increase reduces activity, with 50% inhibition at 0.065-0.085 M and a complete inhibition of the reaction at 0.2 M. In case of dermatan sulfate, the addition of low concentration of CaCl(2) dramatically increases the activity from the basal level. The maximal activity is reached at 0.01 M CaCl(2). Broad-specificity glycosaminoglycan lyase, which acts in an exolytic fashion degrading chondroitin sulfates and dermatan sulfate to yield only disaccharide products. Has a preference for chondroitin 4-sulfate over chondroitin 6-sulfate. Has extremely low activity against hyaluronic acid. Is not active against acharan sulfate, heparin or heparan sulfate. This is Chondroitin sulfate ABC exolyase (chonabc) from Bacteroides thetaiotaomicron.